Consider the following 505-residue polypeptide: OVARIAN TUMOR DOMAIN-containing deubiquitinating enzyme 6 (505 aa).

A disordered region spans residues 1–191 (MTRILVQRGS…NSSDEHMPCY (191 aa)). Low complexity predominate over residues 9-30 (GSSGSSSNSSRPSSSSSSSSGS). The segment covering 51 to 72 (DEKQEEVTVVEKAECSDAKDVA) has biased composition (basic and acidic residues). The span at 73 to 86 (VDSDEPADREDDEG) shows a compositional bias: acidic residues. Pro residues predominate over residues 115-124 (PPVPAPPPKP). Residues 159 to 173 (SSRSSPTGSHPSSPR) show a composition bias toward low complexity. The span at 174–188 (SHSENEGYNSSDEHM) shows a compositional bias: basic and acidic residues. One can recognise an OTU domain in the interval 216 to 339 (FEIRRMLEDG…GNHYNSLVDP (124 aa)). Residue Asp224 is part of the active site. Cys227 functions as the Nucleophile in the catalytic mechanism. Residue His332 is part of the active site. The disordered stretch occupies residues 416–447 (RIGPKESSTSNAETSSSGARPSGSDSKPAEAV). Residues 421–441 (ESSTSNAETSSSGARPSGSDS) are compositionally biased toward low complexity. Positions 446-491 (AVKEKTVLSSSIEMVLSMGFSYAQAMEAYSIFGDDVDSMVCYVLET) constitute a UBA domain.

The protein belongs to the peptidase C85 family. Interacts with KDM1C. Mostly expressed in stems flowers and siliques, and, to a lower extent, in leaves, roots and seedlings.

Its subcellular location is the nucleus. It localises to the cytoplasm. It catalyses the reaction Thiol-dependent hydrolysis of ester, thioester, amide, peptide and isopeptide bonds formed by the C-terminal Gly of ubiquitin (a 76-residue protein attached to proteins as an intracellular targeting signal).. In terms of biological role, hydrolase that can remove conjugated ubiquitin from proteins in vitro and may therefore play an important regulatory role at the level of protein turnover by preventing degradation. Binds chromatin (e.g. nucleosomes and histones) and has enzymatic histone deubiquitinase activity, specific for the H2B histone. Can both repress (e.g. OSR2) and promote (e.g. AN3) the expression of target genes by associating with chromatin, deubiquitinating H2B and regulating its euchromatic histone marks (e.g. H3ac and H3K4me). In association with LDL1/KDM1C, involved in transcriptional gene repression via histone deubiquitination and demethylation. Promotes the concerted epigenetic regulation and repression (e.g. the removal of euchromatic histone acetylation, ubiquitination, and methylation marks) of a set of genes (e.g. GA20OX, WUS, OSR2, ARL and ABI5) that collectively limit plant growth thus stimulating plant growth and increasing cell size. The polypeptide is OVARIAN TUMOR DOMAIN-containing deubiquitinating enzyme 6 (Arabidopsis thaliana (Mouse-ear cress)).